The chain runs to 463 residues: Glycine--tRNA ligase (463 aa).

Residues Arg-102 and Glu-165 each coordinate substrate. ATP-binding positions include Arg-197–Glu-199, Phe-207–Phe-212, Glu-284–Leu-285, and Gly-328–Arg-331. Phe-212 to Glu-216 provides a ligand contact to substrate. Position 324–328 (Glu-324–Gly-328) interacts with substrate.

The protein belongs to the class-II aminoacyl-tRNA synthetase family. In terms of assembly, homodimer.

It is found in the cytoplasm. It carries out the reaction tRNA(Gly) + glycine + ATP = glycyl-tRNA(Gly) + AMP + diphosphate. Functionally, catalyzes the attachment of glycine to tRNA(Gly). The polypeptide is Glycine--tRNA ligase (Mycobacterium bovis (strain ATCC BAA-935 / AF2122/97)).